The primary structure comprises 598 residues: Nuclear receptor subfamily 4 group A member 2 (598 aa).

A disordered region spans residues 1–22 (MPCVQAQYGSSPQGASPASQSY). Residues 8–22 (YGSSPQGASPASQSY) are compositionally biased toward low complexity. Positions 260–335 (EGLCAVCGDN…VGMVKEVVRT (76 aa)) form a DNA-binding region, nuclear receptor. 2 consecutive NR C4-type zinc fingers follow at residues 263 to 283 (CAVCGDNAACQHYGVRTCEGC) and 299 to 323 (CLANKNCPVDKRRRNRCQYCRFQKC). The Bipartite nuclear localization signal (NLS1) signature appears at 287-314 (FKRTVQKNAKYVCLANKNCPVDKRRRNR). A disordered region spans residues 337 to 361 (SLKGRRGRLPSKPKSPQDPSPPSPP). The Nuclear localization signal (NLS1) signature appears at 338–350 (LKGRRGRLPSKPK). Positions 352–361 (PQDPSPPSPP) are enriched in pro residues. In terms of domain architecture, NR LBD spans 360 to 595 (PPVSLISALV…AIIDKLFLDT (236 aa)). The nuclear export sequence (NES1) motif lies at 443–452 (FLELFVLRLA). The nuclear export sequence (NES2) motif lies at 568 to 577 (QGLQRIFYLK).

This sequence belongs to the nuclear hormone receptor family. NR4 subfamily. As to quaternary structure, interacts with SFPQ, NCOR2, SIN3A and HADC1. The interaction with NCOR2 increases in the absence of PITX3. Interacts with PER2. As to expression, shows a ubiquitous distribution in the cerebral cortex, hippocampus, thalamus, amygdala, and midbrain. Expression increases in prenatally stressed adult offspring in the ventral tegmental area, whereas no changes are observed in the substantia nigra area (at protein level). Not expressed in quiescent liver but is rapidly induced following partial hepatectomy and is specific to hepatic growth as it is not induced in other mitogen-treated cells. Expressed at very low levels in the lung, spleen and stomach and at high levels in the brain.

The protein localises to the cytoplasm. The protein resides in the nucleus. Transcriptional regulator which is important for the differentiation and maintenance of meso-diencephalic dopaminergic (mdDA) neurons during development. It is crucial for expression of a set of genes such as SLC6A3, SLC18A2, TH and DRD2 which are essential for development of mdDA neurons. May confer liver-specific regulation of delayed-early genes induced later in the G1 phase of regeneration along with NR4A1. The protein is Nuclear receptor subfamily 4 group A member 2 (Nr4a2) of Rattus norvegicus (Rat).